Consider the following 328-residue polypeptide: Phosphate acyltransferase (328 aa).

The protein belongs to the PlsX family. In terms of assembly, homodimer. Probably interacts with PlsY.

Its subcellular location is the cytoplasm. The enzyme catalyses a fatty acyl-[ACP] + phosphate = an acyl phosphate + holo-[ACP]. Its pathway is lipid metabolism; phospholipid metabolism. Catalyzes the reversible formation of acyl-phosphate (acyl-PO(4)) from acyl-[acyl-carrier-protein] (acyl-ACP). This enzyme utilizes acyl-ACP as fatty acyl donor, but not acyl-CoA. The polypeptide is Phosphate acyltransferase (Staphylococcus haemolyticus (strain JCSC1435)).